The following is a 119-amino-acid chain: UPF0102 protein Sare_1228 (119 aa).

The protein belongs to the UPF0102 family.

In Salinispora arenicola (strain CNS-205), this protein is UPF0102 protein Sare_1228.